A 1155-amino-acid polypeptide reads, in one-letter code: ATP-dependent helicase/deoxyribonuclease subunit B (1155 aa).

The UvrD-like helicase ATP-binding domain occupies 1-300; the sequence is MSLRFIVGRA…AHLEKYYFRH (300 aa). An ATP-binding site is contributed by 8-15; the sequence is GRAGSGKS. In terms of domain architecture, UvrD-like helicase C-terminal spans 280-590; it reads TPVRFQKDSA…VVGTLERSRN (311 aa). Residues Cys-792, Cys-1111, Cys-1114, and Cys-1120 each coordinate [4Fe-4S] cluster.

The protein belongs to the helicase family. AddB/RexB type 1 subfamily. In terms of assembly, heterodimer of AddA and AddB. Mg(2+) serves as cofactor. Requires [4Fe-4S] cluster as cofactor.

In terms of biological role, the heterodimer acts as both an ATP-dependent DNA helicase and an ATP-dependent, dual-direction single-stranded exonuclease. Recognizes the chi site generating a DNA molecule suitable for the initiation of homologous recombination. The AddB subunit has 5' -&gt; 3' nuclease activity but not helicase activity. The polypeptide is ATP-dependent helicase/deoxyribonuclease subunit B (Desulforamulus reducens (strain ATCC BAA-1160 / DSM 100696 / MI-1) (Desulfotomaculum reducens)).